A 215-amino-acid polypeptide reads, in one-letter code: MOB kinase activator-like 1B (215 aa).

The tract at residues 1 to 25 (MSLFGLGRNQKTFRPKKSAPSGTKG) is disordered. Positions 79, 84, 161, and 166 each coordinate Zn(2+).

This sequence belongs to the MOB1/phocein family. In terms of assembly, interacts with SIK1. In terms of tissue distribution, expression is detected along the vasculature in cotyledons, hypocotyls and roots of 3- to 4-day-old seedlings.

In Arabidopsis thaliana (Mouse-ear cress), this protein is MOB kinase activator-like 1B.